A 526-amino-acid polypeptide reads, in one-letter code: DNA polymerase epsilon subunit B (526 aa).

It belongs to the DNA polymerase epsilon subunit B family. Subunit of the DNA polymerase II. Interacts with POL2A (via C-terminus).

The protein localises to the nucleus. Functionally, as accessory component of DNA polymerase II participates in chromosomal DNA replication. Required for the timing and determination of cell fate during plant embryogenesis and root pole development, by promoting cell cycle and cell type patterning. Necessary for proper shoot (SAM) and root apical meristem (RAM) functions. Is essential to promote the first divisions of the zygote. In Arabidopsis thaliana (Mouse-ear cress), this protein is DNA polymerase epsilon subunit B.